The chain runs to 169 residues: Monothiol glutaredoxin-S15, mitochondrial (169 aa).

The N-terminal 37 residues, 1–37, are a transit peptide targeting the mitochondrion; that stretch reads MAASLSSRLIKGIANLKAVRSSRLTSASVYQNGMMRF. Residues 38 to 61 form a disordered region; the sequence is SSTVPSDSDTHDDFKPTQKVPPDS. In terms of domain architecture, Glutaredoxin spans 66-168; the sequence is KDIVENDVKD…QKLKDVSGNQ (103 aa). A glutathione-binding site is contributed by Lys83. Residue Cys91 participates in [2Fe-2S] cluster binding. Residues Lys120, Phe132, and 145–146 contribute to the glutathione site; that span reads SD.

The protein belongs to the glutaredoxin family. CGFS subfamily. In terms of assembly, [2Fe-2S]-bridged holo-homodimer. Interacts in vitro with SUFE1, BOLA1, BOLA2 and BOLA4. Interacts in vivo only with BOLA4.

The protein localises to the mitochondrion. Its function is as follows. May only reduce GSH-thiol disulfides, but not protein disulfides. Participates probably to the maturation of iron-sulfur proteins and to the regulation of the redox state of the BOLA proteins. This Arabidopsis thaliana (Mouse-ear cress) protein is Monothiol glutaredoxin-S15, mitochondrial.